The chain runs to 374 residues: Phosphate acyltransferase (374 aa).

The disordered stretch occupies residues 323 to 374; it reads AEMVDPREPESNPRRRTRPLQVYSGSGPEVLPLGSLERTSSRCPEPVEDAQP. A compositionally biased stretch (basic and acidic residues) spans 326–335; the sequence is VDPREPESNP.

It belongs to the PlsX family. In terms of assembly, homodimer. Probably interacts with PlsY.

It localises to the cytoplasm. The catalysed reaction is a fatty acyl-[ACP] + phosphate = an acyl phosphate + holo-[ACP]. It participates in lipid metabolism; phospholipid metabolism. Its function is as follows. Catalyzes the reversible formation of acyl-phosphate (acyl-PO(4)) from acyl-[acyl-carrier-protein] (acyl-ACP). This enzyme utilizes acyl-ACP as fatty acyl donor, but not acyl-CoA. The sequence is that of Phosphate acyltransferase from Synechococcus sp. (strain JA-2-3B'a(2-13)) (Cyanobacteria bacterium Yellowstone B-Prime).